Consider the following 125-residue polypeptide: MEQHTSHPNRKVPAKEEANAVPLCRAKPSPSYINLQASSPPATFLNVQTTKLPSVDHKPKECLGLLECMYANLQLQTQLAQQQMAILEHLQASVTQLAPGRGSNNSSLPALSPNPLLNHLPQFSK.

Disordered stretches follow at residues 1–21 (MEQH…ANAV) and 97–125 (LAPG…QFSK). Residues 103-125 (SNNSSLPALSPNPLLNHLPQFSK) show a composition bias toward low complexity.

Belongs to the TSACC family. Interacts with HSP70. Associates with HSP90. Interacts with TSSK6; this interaction is direct and recruits TSACC to HSP90.

Functionally, co-chaperone that facilitates HSP-mediated activation of TSSK6. This chain is TSSK6-activating co-chaperone protein (TSACC), found in Macaca fascicularis (Crab-eating macaque).